The sequence spans 585 residues: Nucleoporin p58/p45 (585 aa).

5 tandem repeats follow at residues 7–8, 30–31, 42–43, 61–62, and 66–67. Positions 7-565 are 14 X 2 AA repeats of F-G; sequence FGSGTLGSTT…VSNPASAGFG (559 aa). Positions 194–232 are disordered; that stretch reads TSAASSEGLGGIDFSTSSDKKSDKTGTRPEDSKALKDEN. A compositionally biased stretch (basic and acidic residues) spans 211 to 232; the sequence is SDKKSDKTGTRPEDSKALKDEN. 2 coiled-coil regions span residues 242–262 and 300–367; these read ENLQ…SRMS and ETAQ…SHIT. The residue at position 317 (Thr-317) is a Phosphothreonine. Repeat copies occupy residues 474-475, 478-479, 499-500, 505-506, 515-516, 517-518, 531-532, 554-555, and 564-565. The segment at 563 to 585 is disordered; it reads GFGTGGQLLQLKRPPAGNKRGKR.

It belongs to the NUP58 family. In terms of assembly, component of the p62 complex, a complex composed of NUP62, NUP54, and isoform p58 and isoform p45 of NUP58. Isoform p58 interacts with NUTF2. Isoform p58 interacts with SRP1-alpha and Importin p97 proteins when they are together, but not with SRP1-alpha protein alone. O-glycosylated. In terms of tissue distribution, expressed in liver.

The protein resides in the nucleus. It is found in the nuclear pore complex. The protein localises to the nucleus membrane. Component of the nuclear pore complex, a complex required for the trafficking across the nuclear membrane. This is Nucleoporin p58/p45 from Rattus norvegicus (Rat).